We begin with the raw amino-acid sequence, 321 residues long: Tyrosine recombinase XerC (321 aa).

A Core-binding (CB) domain is found at 16–107; the sequence is PSIAQEMTRW…GLRSFGRFLE (92 aa). The Tyr recombinase domain maps to 128 to 315; the sequence is SLPKPLPMAS…DSERLLEVYA (188 aa). Catalysis depends on residues R173, K199, H267, R270, and H293. Y302 (O-(3'-phospho-DNA)-tyrosine intermediate) is an active-site residue.

The protein belongs to the 'phage' integrase family. XerC subfamily. As to quaternary structure, forms a cyclic heterotetrameric complex composed of two molecules of XerC and two molecules of XerD.

It localises to the cytoplasm. Functionally, site-specific tyrosine recombinase, which acts by catalyzing the cutting and rejoining of the recombining DNA molecules. The XerC-XerD complex is essential to convert dimers of the bacterial chromosome into monomers to permit their segregation at cell division. It also contributes to the segregational stability of plasmids. This chain is Tyrosine recombinase XerC, found in Bradyrhizobium diazoefficiens (strain JCM 10833 / BCRC 13528 / IAM 13628 / NBRC 14792 / USDA 110).